The primary structure comprises 506 residues: Putative basic amino acid antiporter YfcC (506 aa).

A run of 13 helical transmembrane segments spans residues 19–39, 107–127, 148–168, 171–191, 208–228, 231–251, 287–307, 310–330, 352–372, 398–418, 419–439, 442–462, and 485–505; these read LVII…VPVG, GTAV…GIVM, ILFI…FGMG, AVAF…DSIT, WMNP…VLSG, LRIV…MVYA, WLVL…VIVN, FIPE…IIGV, MMIA…LVGN, AVAA…VTSG, SGQA…VGVN, VTVL…PTSA, and LLGL…LMGY.

The protein to H.influenzae HI_0594. This sequence to B.subtilis YcgA.

It localises to the cell inner membrane. Its function is as follows. Metabolomic profiling of different yfcC over-expression and deletion strains suggests that it may affect the glyoxylate shunt. This chain is Putative basic amino acid antiporter YfcC (yfcC), found in Escherichia coli (strain K12).